The primary structure comprises 289 residues: Fatty acid elongase 1 (289 aa).

A run of 7 helical transmembrane segments spans residues 22 to 42 (VVGY…KLFA), 72 to 92 (AMVL…STVT), 123 to 143 (FWIG…IFLV), 152 to 172 (FLHW…YCVG), 177 to 197 (IWVA…FAIA), 208 to 228 (WAPY…FVTL), and 251 to 271 (LLMY…AHVL). The short motif at 154–158 (HWYHH) is the HxxHH motif element. Histidine 157 acts as the Nucleophile in catalysis. An N-linked (GlcNAc...) asparagine glycan is attached at asparagine 282.

The protein belongs to the ELO family.

It is found in the endoplasmic reticulum membrane. The catalysed reaction is an acyl-CoA + malonyl-CoA + H(+) = a 3-oxoacyl-CoA + CO2 + CoA. It functions in the pathway lipid metabolism; fatty acid biosynthesis. Involved in the synthesis of fatty acids. Elongates C4 fatty acids. Required for the normal mitochondrial function, energy metabolism and growth of epimastigotes. In Trypanosoma cruzi (strain CL Brener), this protein is Fatty acid elongase 1.